The sequence spans 177 residues: GTP-dependent dephospho-CoA kinase (177 aa).

GTP contacts are provided by Asp-48, Val-49, Val-50, Asp-67, Lys-69, Glu-124, and Asp-147.

This sequence belongs to the GTP-dependent DPCK family.

The enzyme catalyses 3'-dephospho-CoA + GTP = GDP + CoA + H(+). Its pathway is cofactor biosynthesis; coenzyme A biosynthesis. Functionally, catalyzes the GTP-dependent phosphorylation of the 3'-hydroxyl group of dephosphocoenzyme A to form coenzyme A (CoA). The chain is GTP-dependent dephospho-CoA kinase from Thermococcus onnurineus (strain NA1).